A 233-amino-acid chain; its full sequence is Phosphoglycolate phosphatase (233 aa).

Catalysis depends on D13, which acts as the Nucleophile. The Mg(2+) site is built by D13, D15, and D175.

This sequence belongs to the HAD-like hydrolase superfamily. CbbY/CbbZ/Gph/YieH family. Mg(2+) serves as cofactor.

It catalyses the reaction 2-phosphoglycolate + H2O = glycolate + phosphate. It functions in the pathway organic acid metabolism; glycolate biosynthesis; glycolate from 2-phosphoglycolate: step 1/1. In terms of biological role, specifically catalyzes the dephosphorylation of 2-phosphoglycolate. Is involved in the dissimilation of the intracellular 2-phosphoglycolate formed during the DNA repair of 3'-phosphoglycolate ends, a major class of DNA lesions induced by oxidative stress. The sequence is that of Phosphoglycolate phosphatase from Agrobacterium fabrum (strain C58 / ATCC 33970) (Agrobacterium tumefaciens (strain C58)).